The following is a 499-amino-acid chain: Chaperone SurA (499 aa).

An N-terminal signal peptide occupies residues 1–36 (MKRQEFALFSLTLMLSPWRRVLLPAVLAAMAGPALA). PpiC domains are found at residues 231–333 (PTEF…KLTA) and 352–450 (ITQT…QVEN).

It localises to the periplasm. It carries out the reaction [protein]-peptidylproline (omega=180) = [protein]-peptidylproline (omega=0). Functionally, chaperone involved in the correct folding and assembly of outer membrane proteins. Recognizes specific patterns of aromatic residues and the orientation of their side chains, which are found more frequently in integral outer membrane proteins. May act in both early periplasmic and late outer membrane-associated steps of protein maturation. In Cupriavidus pinatubonensis (strain JMP 134 / LMG 1197) (Cupriavidus necator (strain JMP 134)), this protein is Chaperone SurA.